The following is a 222-amino-acid chain: Putative N-acetylmannosamine-6-phosphate 2-epimerase (222 aa).

The protein belongs to the NanE family.

The enzyme catalyses an N-acyl-D-glucosamine 6-phosphate = an N-acyl-D-mannosamine 6-phosphate. Its pathway is amino-sugar metabolism; N-acetylneuraminate degradation; D-fructose 6-phosphate from N-acetylneuraminate: step 3/5. In terms of biological role, converts N-acetylmannosamine-6-phosphate (ManNAc-6-P) to N-acetylglucosamine-6-phosphate (GlcNAc-6-P). The sequence is that of Putative N-acetylmannosamine-6-phosphate 2-epimerase from Staphylococcus aureus (strain MSSA476).